The sequence spans 87 residues: Small ribosomal subunit protein uS17 (87 aa).

It belongs to the universal ribosomal protein uS17 family. In terms of assembly, part of the 30S ribosomal subunit.

One of the primary rRNA binding proteins, it binds specifically to the 5'-end of 16S ribosomal RNA. The sequence is that of Small ribosomal subunit protein uS17 from Bacillus pumilus (strain SAFR-032).